The primary structure comprises 274 residues: Proteasome subunit beta type-7-B (274 aa).

The propeptide at 1–37 is removed in mature form; it reads MSQSSVDIPPKGGFSFDLCKRNDMLTQKGLKAPSFLK. The active-site Nucleophile is threonine 40.

The protein belongs to the peptidase T1B family. As to quaternary structure, component of the 20S core complex of the 26S proteasome. The 26S proteasome is composed of a core protease (CP), known as the 20S proteasome, capped at one or both ends by the 19S regulatory particle (RP/PA700). The 20S proteasome core is composed of 28 subunits that are arranged in four stacked rings, resulting in a barrel-shaped structure. The two end rings are each formed by seven alpha subunits, and the two central rings are each formed by seven beta subunits. The catalytic chamber with the active sites is on the inside of the barrel.

Its subcellular location is the cytoplasm. It is found in the nucleus. It carries out the reaction Cleavage of peptide bonds with very broad specificity.. In terms of biological role, the proteasome is a multicatalytic proteinase complex which is characterized by its ability to cleave peptides with Arg, Phe, Tyr, Leu, and Glu adjacent to the leaving group at neutral or slightly basic pH. The proteasome has an ATP-dependent proteolytic activity. The protein is Proteasome subunit beta type-7-B (PBB2) of Arabidopsis thaliana (Mouse-ear cress).